We begin with the raw amino-acid sequence, 368 residues long: Single-stranded DNA-binding protein 3 (368 aa).

The LisH domain occupies 16 to 48; sequence AREKLALYVYEYLLHVGAQKSAQTFLSEIRWEK. The tract at residues 100–368 is disordered; sequence PVLGNIPPND…NYSPSMTMSV (269 aa). The segment covering 126 to 139 has biased composition (pro residues); that stretch reads GSQPSPHAQPPPHN. Low complexity-rich tracts occupy residues 174-189, 211-220, and 230-248; these read PNMG…PRGM, GPGMPGINMG, and PSSA…TYVG. Positions 252–262 are enriched in pro residues; it reads GGGPPGTPIMP. Over residues 265-276 the composition is skewed to polar residues; sequence ADSTNSSDNIYT. A compositionally biased stretch (gly residues) spans 295–305; the sequence is GSDGPMGGMGG. Residues 326–337 show a composition bias toward low complexity; that stretch reads NSPNNISGISNP. Residues 353-368 show a composition bias toward polar residues; it reads HSFQNDNYSPSMTMSV.

As to expression, expressed in embryonic fibroblasts and chondrocytes.

The protein localises to the nucleus. May be involved in transcription regulation of the alpha 2(I) collagen gene where it binds to the single-stranded polypyrimidine sequences in the promoter region. The sequence is that of Single-stranded DNA-binding protein 3 (SSBP3) from Gallus gallus (Chicken).